A 796-amino-acid chain; its full sequence is Polyribonucleotide nucleotidyltransferase (796 aa).

Residues Asp490 and Asp496 each contribute to the Mg(2+) site. In terms of domain architecture, KH spans Pro557 to Ile616. Residues Gly626–Arg693 form the S1 motif domain. Over residues Ser714–Ser736 the composition is skewed to low complexity. The tract at residues Ser714–Phe796 is disordered. Residues His740–Arg755 show a composition bias toward basic residues. A compositionally biased stretch (low complexity) spans Ser771–Arg784. Residues Asn785–Phe796 are compositionally biased toward basic and acidic residues.

The protein belongs to the polyribonucleotide nucleotidyltransferase family. The cofactor is Mg(2+).

Its subcellular location is the cytoplasm. It catalyses the reaction RNA(n+1) + phosphate = RNA(n) + a ribonucleoside 5'-diphosphate. Its function is as follows. Involved in mRNA degradation. Catalyzes the phosphorolysis of single-stranded polyribonucleotides processively in the 3'- to 5'-direction. In Ehrlichia canis (strain Jake), this protein is Polyribonucleotide nucleotidyltransferase.